A 1483-amino-acid chain; its full sequence is Dynein axonemal assembly factor 1 homolog (1483 aa).

6 LRR repeats span residues 34–56 (RLND…EEYT), 57–78 (ELKC…EKLS), 79–100 (KLKC…DPCR), 101–122 (ELDT…GTNV), 125–146 (VLNT…SDLI), and 150–171 (TLSV…KIFE). The 39-residue stretch at 185–223 (PVVSRLPQYRKTLILACKELTYLDSRPVFPRDRACAEAW) folds into the LRRCT domain. Disordered stretches follow at residues 249–282 (SINC…TCAE), 300–327 (EEVS…GTSS), 945–986 (DSGD…HGTK), and 1167–1213 (SENE…SIDD). Over residues 311–327 (DGTNSSSSLEDNDGTSS) the composition is skewed to polar residues. Positions 1183–1196 (TNDKESSDIMEKNG) are enriched in basic and acidic residues.

This sequence belongs to the DNAAF1 family.

The protein localises to the cell projection. It is found in the cilium. In terms of biological role, cilium-specific protein required for cilia structures. The polypeptide is Dynein axonemal assembly factor 1 homolog (dtr) (Drosophila melanogaster (Fruit fly)).